The primary structure comprises 284 residues: Tropomyosin (284 aa).

A coiled-coil region spans residues 1-284; the sequence is MEAIKNKMQA…DQTFAELTGY (284 aa). The interval 22–43 is disordered; the sequence is AEIAEQKSRDANLRAEKSEEEV.

This sequence belongs to the tropomyosin family. As to quaternary structure, homodimer.

Its function is as follows. Tropomyosin, in association with the troponin complex, plays a central role in the calcium dependent regulation of muscle contraction. This is Tropomyosin from Lepidoglyphus destructor (Storage mite).